The sequence spans 606 residues: Phosphomethylpyrimidine synthase (606 aa).

Positions 1–13 (MTTADARTPASKQ) are enriched in polar residues. 2 disordered regions span residues 1–49 (MTTA…SRPD) and 105–147 (AGRP…DGRP). Positions 14-31 (NDGTPDGTTPDAGTPNDG) are enriched in low complexity. Residues 105–117 (AGRPVRPEDDGLK) are compositionally biased toward basic and acidic residues. Residues Asn-213, Met-242, Tyr-271, His-307, 327–329 (SRG), 368–371 (DGLR), and Glu-407 contribute to the substrate site. His-411 is a Zn(2+) binding site. Tyr-434 is a substrate binding site. Residue His-475 coordinates Zn(2+). The [4Fe-4S] cluster site is built by Cys-555, Cys-558, and Cys-563.

The protein belongs to the ThiC family. [4Fe-4S] cluster is required as a cofactor.

It catalyses the reaction 5-amino-1-(5-phospho-beta-D-ribosyl)imidazole + S-adenosyl-L-methionine = 4-amino-2-methyl-5-(phosphooxymethyl)pyrimidine + CO + 5'-deoxyadenosine + formate + L-methionine + 3 H(+). The protein operates within cofactor biosynthesis; thiamine diphosphate biosynthesis. In terms of biological role, catalyzes the synthesis of the hydroxymethylpyrimidine phosphate (HMP-P) moiety of thiamine from aminoimidazole ribotide (AIR) in a radical S-adenosyl-L-methionine (SAM)-dependent reaction. In Streptomyces griseus subsp. griseus (strain JCM 4626 / CBS 651.72 / NBRC 13350 / KCC S-0626 / ISP 5235), this protein is Phosphomethylpyrimidine synthase.